The following is a 506-amino-acid chain: Dual specificity protein kinase shkC (506 aa).

A disordered region spans residues 1-21; that stretch reads MDSGLGSSYPEERSGPPEIRP. The segment covering 10–21 has biased composition (basic and acidic residues); sequence PEERSGPPEIRP. Residues 24-284 enclose the Protein kinase domain; that stretch reads INFEELIGTG…IISALDHVII (261 aa). ATP is bound by residues 30–38 and K51; that span reads IGTGSFGKV. D147 functions as the Proton acceptor in the catalytic mechanism. The 93-residue stretch at 396–488 folds into the SH2 domain; that stretch reads WFHGDLDTTE…KLDSQLGVPN (93 aa).

Belongs to the protein kinase superfamily. TKL Ser/Thr protein kinase family. SH2 domain-containing protein kinase subfamily.

It is found in the membrane. It catalyses the reaction L-seryl-[protein] + ATP = O-phospho-L-seryl-[protein] + ADP + H(+). The catalysed reaction is L-threonyl-[protein] + ATP = O-phospho-L-threonyl-[protein] + ADP + H(+). Required for proper chemotaxis and phagocytosis; proper spatiotemporal control of F-actin levels in chemotaxing cells. Negative regulator of the PI3K (phosphatidylinositol 3 kinase) pathway. Predominantly phosphorylates serines and threonines and tyrosines at a lower level. In Dictyostelium discoideum (Social amoeba), this protein is Dual specificity protein kinase shkC (shkC).